Here is a 175-residue protein sequence, read N- to C-terminus: Large ribosomal subunit protein uL10 (175 aa).

It belongs to the universal ribosomal protein uL10 family. Part of the ribosomal stalk of the 50S ribosomal subunit. The N-terminus interacts with L11 and the large rRNA to form the base of the stalk. The C-terminus forms an elongated spine to which L12 dimers bind in a sequential fashion forming a multimeric L10(L12)X complex.

Functionally, forms part of the ribosomal stalk, playing a central role in the interaction of the ribosome with GTP-bound translation factors. This is Large ribosomal subunit protein uL10 from Cyanothece sp. (strain PCC 7425 / ATCC 29141).